Here is a 463-residue protein sequence, read N- to C-terminus: SH3 domain-binding protein 5 (463 aa).

Residues 1–12 (MDTALKRSRSDE) show a composition bias toward basic and acidic residues. Positions 1–69 (MDTALKRSRS…DDINRRETEL (69 aa)) are disordered. The segment covering 25-44 (EKEEEEERMEQGLEEEEEEV) has biased composition (acidic residues). The sufficient for interaction with RAB11A and for guanine nucleotide exchange activity stretch occupies residues 33 to 268 (MEQGLEEEEE…EIHERRRSNA (236 aa)). The span at 45–54 (DPRIQGELEK) shows a compositional bias: basic and acidic residues. Coiled-coil stretches lie at residues 47-93 (RIQG…LAKK), 100-148 (DSKP…RLLE), 157-203 (AWQE…LEKK), and 214-258 (YFEL…RISD). Acidic residues predominate over residues 309–320 (NCSNLVSEDDSE). The tract at residues 309 to 348 (NCSNLVSEDDSETQSVSSFSSGPTSPSEMPDQFPAVARPG) is disordered. Low complexity predominate over residues 323 to 335 (SVSSFSSGPTSPS). A Phosphoserine; by MAPK12 and MAPK9 modification is found at S354. Positions 372–429 (SECSGASSPECEVERGDRAEGAENKMSDKANNNRVLGSTNGGSGRSRSQSSTSLESQA) are disordered. S378 and S379 each carry phosphoserine. Basic and acidic residues predominate over residues 383–399 (EVERGDRAEGAENKMSD). Positions 416 to 428 (RSRSQSSTSLESQ) are enriched in low complexity. Phosphoserine is present on residues S421 and S424.

This sequence belongs to the SH3BP5 family. In terms of assembly, interacts with BTK. Interacts with all isoforms of MAPK8, MAPK9, MAPK10 and MAPK12. Interacts with GDP-bound and nucleotide-free forms of RAB11A.

The protein localises to the cytoplasmic vesicle membrane. It localises to the mitochondrion. Its function is as follows. Functions as a guanine nucleotide exchange factor (GEF) with specificity for RAB11A and RAB25. Inhibits the auto- and transphosphorylation activity of BTK. Plays a negative regulatory role in BTK-related cytoplasmic signaling in B-cells. May be involved in BCR-induced apoptotic cell death. The sequence is that of SH3 domain-binding protein 5 (Sh3bp5) from Mus musculus (Mouse).